The primary structure comprises 157 residues: C-type lectin 9a (157 aa).

The signal sequence occupies residues 1–23; the sequence is MGRFIFVSFGLLVVFLSLSGTGA. Intrachain disulfides connect Cys27–Cys38, Cys55–Cys151, and Cys126–Cys143. The 119-residue stretch at 34 to 152 folds into the C-type lectin domain; it reads YDQYCYKPFN…CQAKKPFVCK (119 aa).

This sequence belongs to the snaclec family. In terms of assembly, heteromultimer; disulfide-linked. As to expression, expressed by the venom gland.

It is found in the secreted. In terms of biological role, interferes with one step of hemostasis (modulation of platelet aggregation, or coagulation cascade, for example). This chain is C-type lectin 9a, found in Crotalus adamanteus (Eastern diamondback rattlesnake).